Reading from the N-terminus, the 165-residue chain is NADPH-dependent 7-cyano-7-deazaguanine reductase (165 aa).

Cys56 serves as the catalytic Thioimide intermediate. Asp63 acts as the Proton donor in catalysis. Residues 78–80 (VES) and 97–98 (HE) contribute to the substrate site.

The protein belongs to the GTP cyclohydrolase I family. QueF type 1 subfamily.

The protein resides in the cytoplasm. The catalysed reaction is 7-aminomethyl-7-carbaguanine + 2 NADP(+) = 7-cyano-7-deazaguanine + 2 NADPH + 3 H(+). The protein operates within tRNA modification; tRNA-queuosine biosynthesis. Functionally, catalyzes the NADPH-dependent reduction of 7-cyano-7-deazaguanine (preQ0) to 7-aminomethyl-7-deazaguanine (preQ1). The protein is NADPH-dependent 7-cyano-7-deazaguanine reductase of Geobacillus thermodenitrificans (strain NG80-2).